We begin with the raw amino-acid sequence, 257 residues long: Snake venom serine protease serpentokallikrein-2 (257 aa).

The N-terminal stretch at 1 to 18 (MVLIRVLANLLILQLSYA) is a signal peptide. Residues 19-24 (QKSSEL) constitute a propeptide that is removed on maturation. Residues 25-248 (VIGGDECNIN…HLDWIKGIIA (224 aa)) form the Peptidase S1 domain. 6 cysteine pairs are disulfide-bonded: cysteine 31–cysteine 162, cysteine 49–cysteine 65, cysteine 97–cysteine 255, cysteine 141–cysteine 209, cysteine 173–cysteine 188, and cysteine 199–cysteine 224. The active-site Charge relay system is the histidine 64. Asparagine 102 carries an N-linked (GlcNAc...) asparagine glycan. Aspartate 109 (charge relay system) is an active-site residue. Serine 203 serves as the catalytic Charge relay system.

This sequence belongs to the peptidase S1 family. Snake venom subfamily. In terms of assembly, monomer. Expressed by the venom gland.

The protein localises to the secreted. Snake venom serine protease that may act in the hemostasis system of the prey. This chain is Snake venom serine protease serpentokallikrein-2, found in Protobothrops mucrosquamatus (Taiwan habu).